Here is a 216-residue protein sequence, read N- to C-terminus: Ras-related protein Rab-11A (216 aa).

Residue G2 is modified to N-acetylglycine. Residues S20, G21, V22, G23, K24, S25, N26, N37, L38, S40, S42, and T43 each contribute to the GTP site. Residue S25 participates in Mg(2+) binding. Residues 36–47 (FNLESKSTIGVE) carry the Switch 1 motif. Mg(2+) is bound by residues T43 and D66. The Switch 2 signature appears at 67–86 (TAGQERYRAITSAYYRGAVG). GTP is bound by residues G69, N124, K125, D127, A155, and L156. A disordered region spans residues 183–211 (DRRENDMSPSNNVVPIHVPPTTENKPKVQ). S-geranylgeranyl cysteine attachment occurs at residues C212 and C213. C213 carries the post-translational modification Cysteine methyl ester. Residues 214 to 216 (QNI) constitute a propeptide, removed in mature form.

This sequence belongs to the small GTPase superfamily. Rab family. In terms of assembly, interacts (GTP-bound form) with RAB11FIPs (via their C-termini) including RAB11FIP1, RAB11FIP2, RAB11FIP3, RAB11FIP4 and RAB11FIP5 effectors. Forms a complex with RAB11FIP3 and dynein intermediate chain DYNC1LI1; the interaction between RAB11A1 and RAB11FIP3 is direct; the complex regulates endocytic trafficking. Interacts with EVI5; EVI5 and RAB11FIP3 may be mutually exclusive and compete for binding RAB11A. Interacts with SGSM1, SGSM2, SGSM3 and VIPAS39. Interacts with EXOC6 in a GTP-dependent manner. Interacts with RAB11FIP5. Interacts with STXBP6. Interacts (GDP-bound form) with ZFYVE27. Interacts with BIRC6/bruce. May interact with TBC1D14. Interacts with UNC119; in a cell cycle-dependent manner. GDP-bound and nucleotide-free forms interact with SH3BP5. Interacts (GDP-bound form) with KIF5A in a ZFYVE27-dependent manner. Interacts (GDP-bound form) with RELCH. Found in a complex composed of RELCH, OSBP1 and RAB11A. Interacts with TBC1D12. Interacts with DEF6. Interacts with ATP9A. Forms a heterotetramer with RAB11FIP3; the GTP-bound form is preferred for binding. Forms a complex with Rabin8/RAB3IP and RAB11FIP3, probably a heterohexamer with two of each protein subunit, where Rabin8/RAB3IP and RAB11FIP3 simultaneously bind to RAB11A; the complex promotes preciliary trafficking and cilia growth. Forms a complex containing RAB11A, ASAP1, Rabin8/RAB3IP, RAP11FIP3 and ARF4; the complex promotes preciliary trafficking; the complex binds to RHO in photoreceptor cells and promotes RHO ciliary transport. Interacts (GTP-bound form) with WDR44; the interaction prevents RAB11A-RAB3IP-RAB11FIP3 complex formation. The cofactor is Mg(2+). As to expression, detected in various tissues, such as brain, testis, spleen, and heart.

Its subcellular location is the cell membrane. It localises to the endosome membrane. The protein localises to the recycling endosome membrane. The protein resides in the cleavage furrow. It is found in the cytoplasmic vesicle. Its subcellular location is the phagosome. It localises to the cytoplasmic vesicle membrane. The protein localises to the golgi apparatus. The protein resides in the trans-Golgi network. It catalyses the reaction GTP + H2O = GDP + phosphate + H(+). Its activity is regulated as follows. Regulated by guanine nucleotide exchange factors (GEFs) which promote the exchange of bound GDP for free GTP. Regulated by GTPase activating proteins (GAPs) which increase the GTP hydrolysis activity. Inhibited by GDP dissociation inhibitors (GDIs) which prevent Rab-GDP dissociation. Functionally, the small GTPases Rab are key regulators of intracellular membrane trafficking, from the formation of transport vesicles to their fusion with membranes. Rabs cycle between an inactive GDP-bound form and an active GTP-bound form that is able to recruit to membranes different set of downstream effectors directly responsible for vesicle formation, movement, tethering and fusion. The small Rab GTPase RAB11A regulates endocytic recycling. Forms a functional Rab11/RAB11FIP3/dynein complex that regulates the movement of peripheral sorting endosomes (SE) along microtubule tracks toward the microtubule organizing center/centrosome, generating the endosomal recycling compartment (ERC). Acts as a major regulator of membrane delivery during cytokinesis. Together with MYO5B and RAB8A participates in epithelial cell polarization. Together with Rabin8/RAB3IP, RAB8A, the exocyst complex, PARD3, PRKCI, ANXA2, CDC42 and DNMBP promotes transcytosis of PODXL to the apical membrane initiation sites (AMIS), apical surface formation and lumenogenesis. Together with MYO5B participates in CFTR trafficking to the plasma membrane and TF (Transferrin) recycling in nonpolarized cells. Required in a complex with MYO5B and RAB11FIP2 for the transport of NPC1L1 to the plasma membrane. Participates in the sorting and basolateral transport of CDH1 from the Golgi apparatus to the plasma membrane. Regulates the recycling of FCGRT (receptor of Fc region of monomeric IgG) to basolateral membranes. May also play a role in melanosome transport and release from melanocytes. Promotes Rabin8/RAB3IP preciliary vesicular trafficking to mother centriole by forming a ciliary targeting complex containing Rab11, ASAP1, Rabin8/RAB3IP, RAB11FIP3 and ARF4, thereby regulating ciliogenesis initiation. On the contrary, upon LPAR1 receptor signaling pathway activation, interaction with phosphorylated WDR44 prevents Rab11-RAB3IP-RAB11FIP3 complex formation and cilia growth. Participates in the export of a subset of neosynthesized proteins through a Rab8-Rab10-Rab11-endososomal dependent export route via interaction with WDR44. This chain is Ras-related protein Rab-11A, found in Rattus norvegicus (Rat).